The sequence spans 200 residues: GMP synthase [glutamine-hydrolyzing] subunit A (200 aa).

A Glutamine amidotransferase type-1 domain is found at 3-193 (KIYVVDNGGQ…IGICASYREI (191 aa)). Cys80 serves as the catalytic Nucleophile. Residues His167 and Glu169 contribute to the active site.

Heterodimer composed of a glutamine amidotransferase subunit (A) and a GMP-binding subunit (B).

The enzyme catalyses XMP + L-glutamine + ATP + H2O = GMP + L-glutamate + AMP + diphosphate + 2 H(+). The protein operates within purine metabolism; GMP biosynthesis; GMP from XMP (L-Gln route): step 1/1. In terms of biological role, catalyzes the synthesis of GMP from XMP. In Thermoplasma acidophilum (strain ATCC 25905 / DSM 1728 / JCM 9062 / NBRC 15155 / AMRC-C165), this protein is GMP synthase [glutamine-hydrolyzing] subunit A.